Consider the following 485-residue polypeptide: MKPTIALVGRPNVGKSTLFNRLTRTKDALVHDLPGLTRDRHYGHGKVGSKPYLVIDTGGFEPVVDSGILHEMAKQTLQAVDEADAVVFLVDGRTGLTPQDKIIADRLRQSPRPVYLAVNKGEGGNRAVLAAEFYELALGDPYVISGAHGDGVYYLIEDILETFPEPEAEEADAKHPVFAVIGRPNVGKSTLVNAILGEERVIAFDMAGTTRDSIHIDFEREGKPFTIIDTAGVRRRGKVDEAVEKFSVIKAMQAVEAANVAVLVLDAQQDIADQDATIAGFALEAGRALVVAVNKWDGISEERREQVKRDINRKLYFLDFAKFHFISALKERGIDGLFDSIQAAYNAAMIKMPTPKITRVLQSAIERQQPPRAGLVRPKMRYAHQGGMNPPVIVVHGNSLHAISDSYTRYLTQTFRKAFNLQGTPLRIQYNVSENPYENAEDKPKKKPLRRVSLSNRIEKREGRKEEKNRFKKKTKVSVKKQFSK.

2 consecutive EngA-type G domains span residues Pro-3–Glu-167 and Pro-176–Met-349. GTP-binding positions include Gly-9–Ser-16, Asp-56–Phe-60, Asn-119–Glu-122, Gly-182–Ser-189, Asp-229–Val-233, and Asn-294–Asp-297. The region spanning Ile-350–Glu-434 is the KH-like domain. Residues Asn-435–Lys-485 form a disordered region. Basic and acidic residues predominate over residues Arg-457–Asn-469. Positions Arg-470 to Lys-485 are enriched in basic residues.

It belongs to the TRAFAC class TrmE-Era-EngA-EngB-Septin-like GTPase superfamily. EngA (Der) GTPase family. Associates with the 50S ribosomal subunit.

Functionally, GTPase that plays an essential role in the late steps of ribosome biogenesis. This chain is GTPase Der, found in Neisseria meningitidis serogroup C / serotype 2a (strain ATCC 700532 / DSM 15464 / FAM18).